An 839-amino-acid polypeptide reads, in one-letter code: DNA gyrase subunit A (839 aa).

Positions 46–510 constitute a Topo IIA-type catalytic domain; it reads LPDARDGLKP…ISEDIDDEDL (465 aa). Tyr-134 functions as the O-(5'-phospho-DNA)-tyrosine intermediate in the catalytic mechanism. The GyrA-box signature appears at 537-543; the sequence is QHRGGVG.

It belongs to the type II topoisomerase GyrA/ParC subunit family. As to quaternary structure, heterotetramer, composed of two GyrA and two GyrB chains. In the heterotetramer, GyrA contains the active site tyrosine that forms a transient covalent intermediate with DNA, while GyrB binds cofactors and catalyzes ATP hydrolysis.

It is found in the cytoplasm. The catalysed reaction is ATP-dependent breakage, passage and rejoining of double-stranded DNA.. Its function is as follows. A type II topoisomerase that negatively supercoils closed circular double-stranded (ds) DNA in an ATP-dependent manner to modulate DNA topology and maintain chromosomes in an underwound state. Negative supercoiling favors strand separation, and DNA replication, transcription, recombination and repair, all of which involve strand separation. Also able to catalyze the interconversion of other topological isomers of dsDNA rings, including catenanes and knotted rings. Type II topoisomerases break and join 2 DNA strands simultaneously in an ATP-dependent manner. The polypeptide is DNA gyrase subunit A (Mycoplasma pneumoniae (strain ATCC 29342 / M129 / Subtype 1) (Mycoplasmoides pneumoniae)).